Reading from the N-terminus, the 93-residue chain is MSRSLKKGPYVEGRLLARVEKMNAANEKRVLKTWSRSSTIFPQMVGHTIAVHEGRKHIPIYITEDMVGHKLGEFAPTRTYKGHAGSEKSSGLR.

This sequence belongs to the universal ribosomal protein uS19 family.

Functionally, protein S19 forms a complex with S13 that binds strongly to the 16S ribosomal RNA. The chain is Small ribosomal subunit protein uS19 from Desulfitobacterium hafniense (strain Y51).